The chain runs to 260 residues: Crotonyl-CoA hydratase (260 aa).

Glu114 (nucleophile) is an active-site residue. Glu134 serves as the catalytic Proton acceptor.

It belongs to the enoyl-CoA hydratase/isomerase family. As to quaternary structure, homotetramer.

Its subcellular location is the cytoplasm. The enzyme catalyses 3-hydroxybutanoyl-CoA = (2E)-butenoyl-CoA + H2O. The catalysed reaction is a short-chain (3S)-3-hydroxyacyl-CoA = a short-chain (2E)-enoyl-CoA + H2O. It functions in the pathway lipid metabolism; butanoate metabolism. Involved in syntrophic growth of S.wolfei with butyrate, as part of the butyrate oxidation pathway. Probably catalyzes the hydration of crotonyl-CoA to 3-hydroxybutyryl-CoA. This is Crotonyl-CoA hydratase from Syntrophomonas wolfei subsp. wolfei (strain DSM 2245B / Goettingen).